The chain runs to 198 residues: Recombination protein RecR (198 aa).

The C4-type zinc-finger motif lies at 57-72; the sequence is CEKCNTFTEAQICEVC. In terms of domain architecture, Toprim spans 80 to 175; it reads TLLCVVETPA…AVTRLARGVP (96 aa).

It belongs to the RecR family.

Its function is as follows. May play a role in DNA repair. It seems to be involved in an RecBC-independent recombinational process of DNA repair. It may act with RecF and RecO. The protein is Recombination protein RecR of Burkholderia ambifaria (strain MC40-6).